Reading from the N-terminus, the 123-residue chain is MPRATLPAEARLHRPSEFAAALKGRRLARGAFFIVSASPCAPADDQPARARLGLVIAKRFAARAVTRNTLKRVIREAFRARRLALPAQDYVVRLHSKLTPASLTALKRSARAEVDAHFTRIAR.

It belongs to the RnpA family. Consists of a catalytic RNA component (M1 or rnpB) and a protein subunit.

It catalyses the reaction Endonucleolytic cleavage of RNA, removing 5'-extranucleotides from tRNA precursor.. RNaseP catalyzes the removal of the 5'-leader sequence from pre-tRNA to produce the mature 5'-terminus. It can also cleave other RNA substrates such as 4.5S RNA. The protein component plays an auxiliary but essential role in vivo by binding to the 5'-leader sequence and broadening the substrate specificity of the ribozyme. The protein is Ribonuclease P protein component of Bordetella bronchiseptica (strain ATCC BAA-588 / NCTC 13252 / RB50) (Alcaligenes bronchisepticus).